Reading from the N-terminus, the 649-residue chain is Threonine--tRNA ligase (649 aa).

Residues 1-60 (MHVTLPDGKQLDLQAGATALDVARALGPRLAQDALAALVNGELMDLMTPLPEGAQVRLIT) form the TGS domain. Residues 248-544 (DHRKLGRELE…LIEHYGGDFP (297 aa)) form a catalytic region. Zn(2+) contacts are provided by C341, H392, and H521.

It belongs to the class-II aminoacyl-tRNA synthetase family. Homodimer. It depends on Zn(2+) as a cofactor.

The protein localises to the cytoplasm. The catalysed reaction is tRNA(Thr) + L-threonine + ATP = L-threonyl-tRNA(Thr) + AMP + diphosphate + H(+). Its function is as follows. Catalyzes the attachment of threonine to tRNA(Thr) in a two-step reaction: L-threonine is first activated by ATP to form Thr-AMP and then transferred to the acceptor end of tRNA(Thr). Also edits incorrectly charged L-seryl-tRNA(Thr). This Deinococcus geothermalis (strain DSM 11300 / CIP 105573 / AG-3a) protein is Threonine--tRNA ligase.